Here is a 492-residue protein sequence, read N- to C-terminus: Transcript termination protein A18 (492 aa).

Residues 100–256 (MIELKRPLYI…NSIINIAKLS (157 aa)) enclose the Helicase ATP-binding domain. An ATP-binding site is contributed by 113-120 (LACGFGKT). The DESH box signature appears at 206 to 209 (DESH).

Belongs to the helicase family. Poxviruses subfamily. As to quaternary structure, interacts with G2. Might be part of a transcription complex composed at least of G2, A18, and H5.

It is found in the virion. In terms of biological role, DNA helicase which seems to act as a postreplicative transcription termination factor. Involved in ATP-dependent release of nascent RNA. Forms a stable complex with single-stranded DNA, and to a lesser extent RNA. This Bos taurus (Bovine) protein is Transcript termination protein A18.